The sequence spans 305 residues: Putative E3 ubiquitin-protein ligase SINAT1 (305 aa).

The RING-type zinc finger occupies 57-93; that stretch reads CPVCTNLMYPPIHQCPNGHTLCSSCKLRVQNTCPTCR. An SBD region spans residues 107–300; it reads VAESLEVPCR…EELKLRVTGR (194 aa). An SIAH-type zinc finger spans residues 110–170; the sequence is SLEVPCRYQN…LVDHLKDDHK (61 aa). The Zn(2+) site is built by cysteine 115, cysteine 122, histidine 134, cysteine 138, cysteine 145, cysteine 152, histidine 164, and histidine 169.

Belongs to the SINA (Seven in absentia) family. As to quaternary structure, interacts with SINAT6. Interacts with ATG6 and TRAF1A. Interacts with WAV3. Interacts with FREE1. Interacts with ELC/VPS23A.

Its subcellular location is the endosome. The protein localises to the multivesicular body. The protein resides in the cytoplasmic vesicle. It localises to the autophagosome. It catalyses the reaction S-ubiquitinyl-[E2 ubiquitin-conjugating enzyme]-L-cysteine + [acceptor protein]-L-lysine = [E2 ubiquitin-conjugating enzyme]-L-cysteine + N(6)-ubiquitinyl-[acceptor protein]-L-lysine.. It participates in protein modification; protein ubiquitination. Its function is as follows. E3 ubiquitin-protein ligase that mediates ubiquitination and subsequent proteasomal degradation of target proteins. E3 ubiquitin ligases accept ubiquitin from an E2 ubiquitin-conjugating enzyme in the form of a thioester and then directly transfers the ubiquitin to targeted substrates. It probably triggers the ubiquitin-mediated degradation of different substrates. Mediates the proteasomal-dependent degradation of ATG6, a component of the autophagosome complex. Requires TRAF1A/MUSE14 and TRAF1B/MUSE13 to target ATG6 for ubiquitination and subsequent regulation of autophagosome assembly. Modulates directly the ubiquitination and proteasomal-dependent degradation of FREE1, a component of the ESCRT-I complex. Modulates directly the ubiquitination and proteasomal-dependent degradation of ELC/VPS23A, a component of the ESCRT-I complex. The sequence is that of Putative E3 ubiquitin-protein ligase SINAT1 from Arabidopsis thaliana (Mouse-ear cress).